Reading from the N-terminus, the 557-residue chain is Arginine--tRNA ligase (557 aa).

Positions 132 to 142 match the 'HIGH' region motif; that stretch reads ANPTGLLHMGN.

The protein belongs to the class-I aminoacyl-tRNA synthetase family. As to quaternary structure, monomer.

It localises to the cytoplasm. It carries out the reaction tRNA(Arg) + L-arginine + ATP = L-arginyl-tRNA(Arg) + AMP + diphosphate. This is Arginine--tRNA ligase from Carboxydothermus hydrogenoformans (strain ATCC BAA-161 / DSM 6008 / Z-2901).